We begin with the raw amino-acid sequence, 401 residues long: Divinyl chlorophyllide a 8-vinyl-reductase, chloroplastic (401 aa).

Positions 1–10 are enriched in polar residues; it reads MATILLSSRL. Residues 1-26 form a disordered region; sequence MATILLSSRLPTTGTATPSPTRPAPR. The N-terminal 54 residues, 1–54, are a transit peptide targeting the chloroplast; sequence MATILLSSRLPTTGTATPSPTRPAPRFLSFPGTAIRRRGRGPLLASSAVSPPAP.

It localises to the plastid. It is found in the chloroplast. It catalyses the reaction protochlorophyllide a + NADP(+) = 3,8-divinyl protochlorophyllide a + NADPH + H(+). Its pathway is porphyrin-containing compound metabolism; chlorophyll biosynthesis. Its function is as follows. Catalyzes the conversion of divinyl chlorophyllide to monovinyl chlorophyllide. Reduces the 8-vinyl group of the tetrapyrrole to an ethyl group using NADPH as the reductant. Can use (3,8-divinyl)-chlorophyllide a (DV-Chlidea) &gt; (3,8-divinyl)-chlorophyll a (DV-Chla) &gt; (3,8-divinyl)-protochlorophyllide a (DV-Pchlidea) &gt; (3,8-divinyl)-magnesium-protoporphyrin IX monomethyl ester (DV-MPE) &gt; (3,8-divinyl)-magnesium-protoporphyrin IX (DV-Mg-Proto) as substrates. This chain is Divinyl chlorophyllide a 8-vinyl-reductase, chloroplastic (DVR), found in Zea mays (Maize).